We begin with the raw amino-acid sequence, 58 residues long: Protein translocase subunit SecE (58 aa).

Residues 38–58 (IVMAFVGLLAYLIQLVLAFII) traverse the membrane as a helical segment.

The protein belongs to the SecE/SEC61-gamma family. In terms of assembly, component of the Sec protein translocase complex. Heterotrimer consisting of SecY (alpha), SecG (beta) and SecE (gamma) subunits. The heterotrimers can form oligomers, although 1 heterotrimer is thought to be able to translocate proteins. Interacts with the ribosome. May interact with SecDF, and other proteins may be involved.

It localises to the cell membrane. In terms of biological role, essential subunit of the Sec protein translocation channel SecYEG. Clamps together the 2 halves of SecY. May contact the channel plug during translocation. The protein is Protein translocase subunit SecE of Acidianus ambivalens (Desulfurolobus ambivalens).